The primary structure comprises 1538 residues: Ferredoxin-dependent glutamate synthase (1538 aa).

Residue cysteine 34 is the For GATase activity of the active site. Residues 34 to 431 (CGVGFIADVN…PGQMISVDIF (398 aa)) enclose the Glutamine amidotransferase type-2 domain. Position 1109 to 1166 (1109 to 1166 (LSEVHQLLAENQLRDRVTLRVDGGLRTGSDIVLAAIMGAEEFGFGTVAMIATGCIMAR)) interacts with FMN. [3Fe-4S] cluster contacts are provided by cysteine 1162, cysteine 1168, and cysteine 1173.

It belongs to the glutamate synthase family. Monomer. Requires [3Fe-4S] cluster as cofactor. FAD is required as a cofactor. The cofactor is FMN.

The protein localises to the plastid. Its subcellular location is the chloroplast stroma. It carries out the reaction 2 oxidized [2Fe-2S]-[ferredoxin] + 2 L-glutamate = L-glutamine + 2 reduced [2Fe-2S]-[ferredoxin] + 2-oxoglutarate + 2 H(+). The protein operates within amino-acid biosynthesis; L-glutamate biosynthesis via GLT pathway; L-glutamate from 2-oxoglutarate and L-glutamine (ferredoxin route): step 1/1. It participates in energy metabolism; nitrogen metabolism. This is Ferredoxin-dependent glutamate synthase (gltB) from Pyropia yezoensis (Susabi-nori).